The chain runs to 618 residues: Crinkler effector protein 16 (618 aa).

An N-terminal signal peptide occupies residues 1–19 (MVVVSLQCAIVGQAGSSFD). An LQLFLAK domain region spans residues 18–57 (FDVEIDDGAKVSKLKDAIKAKKPNDFKVVDADKLHLFLAK). Residues 58-139 (QPVEDESGKE…NMELPSSEQI (82 aa)) form a DWL domain region. The HVLVXXP motif motif lies at 140–146 (HVLVVVP). Asn-534 carries N-linked (GlcNAc...) asparagine glycosylation.

Belongs to the Crinkler effector family.

It is found in the secreted. It localises to the host nucleus. Its function is as follows. Secreted effector that elicits necrosis in host plants, a characteristic of plant innate immunity. This chain is Crinkler effector protein 16, found in Phytophthora infestans (Potato late blight agent).